The following is a 917-amino-acid chain: Major intrinsically disordered Notch2-binding receptor 1 (917 aa).

The Cytoplasmic segment spans residues 1–892 (MEANQEASLF…AEFRRAKVCK (892 aa)). 7 disordered regions span residues 337-367 (STYF…WPAK), 388-410 (PSEE…GPDR), 461-483 (SCTS…QHVL), 568-588 (ITNG…NVHH), 652-687 (SEAP…CSDA), 706-727 (TRPS…IASI), and 746-783 (NEEE…LPKQ). Polar residues predominate over residues 461 to 480 (SCTSGQHSSDTSSVGTQTEQ). The segment covering 576 to 588 (KGDKCNRPENVHH) has biased composition (basic and acidic residues). The residue at position 712 (S712) is a Phosphoserine. A helical membrane pass occupies residues 893-913 (IAALITAAACTVILVIVVPIC). Over 914–917 (TMKS) the chain is Extracellular.

It belongs to the MINAR family. In terms of assembly, interacts with NOTCH2; this interaction increases MINAR1 stability. Interacts (via N-terminus) with DEPTOR (via PDZ domain); this interaction may stabilize DEPTOR protein by impairing its ubiquitination. In terms of tissue distribution, expressed in brain and in islets of Langerhans.

The protein resides in the cell membrane. Functionally, intrinsically disordered protein which may negatively regulate mTOR signaling pathway by stabilizing the mTOR complex component DEPTOR. Negatively regulates angiogenesis. Negatively regulates cell growth. Negatively regulates neurite outgrowth in hippocampal neurons. This Mus musculus (Mouse) protein is Major intrinsically disordered Notch2-binding receptor 1 (Minar1).